A 364-amino-acid chain; its full sequence is Lysophosphatidic acid receptor 1 (364 aa).

The Extracellular portion of the chain corresponds to 1-50; that stretch reads MAAASTSSPVISQPQFTAMNEQQCFYNESIAFFYNRSGKYLATEWNTVSK. 2 cysteine pairs are disulfide-bonded: Cys24–Cys190 and Cys188–Cys195. 2 N-linked (GlcNAc...) asparagine glycosylation sites follow: Asn27 and Asn35. Lys39 is an a 1-acyl-sn-glycero-3-phosphate binding site. Residues 51 to 75 form a helical membrane-spanning segment; the sequence is LVMGLGITVCVFIMLANLLVMVAIY. Residues 76–83 are Cytoplasmic-facing; it reads VNRRFHFP. The helical transmembrane segment at 84 to 107 threads the bilayer; it reads IYYLMANLAAADFFAGLAYFYLMF. Over 108–121 the chain is Extracellular; the sequence is NTGPNTRRLTVSTW. Residues 122–144 traverse the membrane as a helical segment; the sequence is LLRQGLIDTSLTASVANLLAIAI. Residue 124-129 participates in a 1-acyl-sn-glycero-3-phosphate binding; sequence RQGLID. Topologically, residues 145 to 163 are cytoplasmic; sequence ERHITVFRMQLHTRMSNRR. The chain crosses the membrane as a helical span at residues 164-184; it reads VVVVIVVIWTMAIVMGAIPSV. At 185–204 the chain is on the extracellular side; that stretch reads GWNCICDIDHCSNMAPLYSD. Residues 205–225 form a helical membrane-spanning segment; it reads SYLVFWAIFNLVTFVVMVVLY. Position 210 (Trp210) interacts with a 1-acyl-sn-glycero-3-phosphate. The Cytoplasmic segment spans residues 226 to 255; sequence AHIFGYVRQRTMRMSRHSSGPRRNRDTMMS. The helical transmembrane segment at 256–280 threads the bilayer; it reads LLKTVVIVLGAFIVCWTPGLVLLLL. The Extracellular segment spans residues 281-294; sequence DVCCPQCDVLAYEK. A disulfide bond links Cys284 and Cys287. The chain crosses the membrane as a helical span at residues 295 to 315; the sequence is FFLLLAEFNSAMNPIIYSYRD. Residues 316–364 lie on the Cytoplasmic side of the membrane; the sequence is KEMSATFRQILCCQRNENPNGPTEGSDRSASSLNHTILAGVHSNDHSVV. The residue at position 341 (Ser341) is a Phosphoserine. Position 351 is a phosphothreonine (Thr351).

Belongs to the G-protein coupled receptor 1 family. Interacts with RALA and GRK2. Interacts with GNAQ and GNA13. Interacts with CD14; the interaction is enhanced by exposure to bacterial lipopolysaccharide (LPS). N-glycosylated. In terms of tissue distribution, detected in lung. Detected in oligodendrocytes in corpus callosum in brain cortex (at protein level). Expressed within the embryonic cerebral cortex, where it is enriched in the ventricular zone. In the adult brain, also expressed in oligodendrocytes, as well as Schwann cells of the peripheral nervous system. Expressed in many other tissues, including lung, heart, intestine, spleen, thymus, and stomach. No expression in liver. Detected in kidney and testis. Detected in embryonic fibroblasts. Detected in adult lung fibroblasts and lung endothelial cells. Detected in dorsal root ganglion and dorsal root. Detected in astrocytes. Detected in bone.

It localises to the cell surface. Its subcellular location is the cell membrane. The protein resides in the endosome. Functionally, receptor for lysophosphatidic acid (LPA). Plays a role in the reorganization of the actin cytoskeleton, cell migration, differentiation and proliferation, and thereby contributes to the responses to tissue damage and infectious agents. Activates downstream signaling cascades via the G(i)/G(o), G(12)/G(13), and G(q) families of heteromeric G proteins. Signaling inhibits adenylyl cyclase activity and decreases cellular cAMP levels. Signaling triggers an increase of cytoplasmic Ca(2+) levels. Activates RALA; this leads to the activation of phospholipase C (PLC) and the formation of inositol 1,4,5-trisphosphate. Signaling mediates activation of down-stream MAP kinases. Contributes to the regulation of cell shape. Promotes Rho-dependent reorganization of the actin cytoskeleton in neuronal cells and neurite retraction. Promotes the activation of Rho and the formation of actin stress fibers. Promotes formation of lamellipodia at the leading edge of migrating cells via activation of RAC1. Through its function as LPA receptor, plays a role in chemotaxis and cell migration, including responses to injury and wounding. Plays a role in triggering inflammation in response to bacterial lipopolysaccharide (LPS) via its interaction with CD14. Promotes cell proliferation in response to LPA. Inhibits the intracellular ciliogenesis pathway in response to LPA and through AKT1 activation. Required for normal skeleton development. May play a role in osteoblast differentiation. Required for normal brain development. Required for normal proliferation, survival and maturation of newly formed neurons in the adult dentate gyrus. Plays a role in pain perception and in the initiation of neuropathic pain. The chain is Lysophosphatidic acid receptor 1 (Lpar1) from Mus musculus (Mouse).